The sequence spans 328 residues: Formimidoylglutamase (328 aa).

6 residues coordinate Mn(2+): histidine 133, aspartate 159, histidine 161, aspartate 163, aspartate 253, and aspartate 255.

This sequence belongs to the arginase family. The cofactor is Mn(2+).

It carries out the reaction N-formimidoyl-L-glutamate + H2O = formamide + L-glutamate. Its pathway is amino-acid degradation; L-histidine degradation into L-glutamate; L-glutamate from N-formimidoyl-L-glutamate (hydrolase route): step 1/1. Functionally, catalyzes the conversion of N-formimidoyl-L-glutamate to L-glutamate and formamide. The polypeptide is Formimidoylglutamase (Streptococcus pyogenes serotype M1).